Reading from the N-terminus, the 270-residue chain is Phthiotriol/phenolphthiotriol dimycocerosates methyltransferase (270 aa).

The protein belongs to the methyltransferase superfamily. Phthiotriol/phenolphthiotriol dimycocerosates methyltransferase family.

Functionally, catalyzes the methylation of the lipid moiety of the intermediate compounds phthiotriol and glycosylated phenolphthiotriol dimycoserosates to form phthiocerol dimycocerosates (DIM A) and glycosylated phenolphthiocerol dimycocerosates (PGL). The protein is Phthiotriol/phenolphthiotriol dimycocerosates methyltransferase of Mycobacterium bovis (strain ATCC BAA-935 / AF2122/97).